A 478-amino-acid polypeptide reads, in one-letter code: MSTNGDDHQVKDSLEQLRCHFTWELSIDDDEMPDLENRVLDQIEFLDTKYSVGIHNLLAYVKHLKGQNEEALKSLKEAENLMQEEHDNQANVRSLVTWGNFAWMYYHMGRLAEAQTYLDKVENICKKLSNPFRYRMECPEIDCEEGWALLKCGGKNYERAKACFEKVLEVDPENPESSAGYAISAYRLDGFKLATKNHKPFSLLPLRQAVRLNPDNGYIKVLLALKLQDEGQEAEGEKYIEEALANMSSQTYVFRYAAKFYRRKGSVDKALELLKKALQETPTSVLLHHQIGLCYKAQMIQIKEATKGQPRGQNREKLDKMIRSAIFHFESAVEKKPTFEVAHLDLARMYIEAGNHRKAEENFQKLLCMKPVVEETMQDIHFHYGRFQEFQKKSDVNAIIHYLKAIKIEQASLTRDKSINSLKKLVLRKLRRKALDLESLSLLGFVYKLEGNMNEALEYYERALRLAADFENSVRQGP.

6 TPR repeats span residues 52–85, 95–128, 141–174, 183–216, 218–249, and 251–284; these read VGIHNLLAYVKHLKGQNEEALKSLKEAENLMQEE, LVTWGNFAWMYYHMGRLAEAQTYLDKVENICKKL, IDCEEGWALLKCGGKNYERAKACFEKVLEVDPEN, ISAYRLDGFKLATKNHKPFSLLPLRQAVRLNPDN, YIKVLLALKLQDEGQEAEGEKYIEEALANMSS, and TYVFRYAAKFYRRKGSVDKALELLKKALQETPTS. Trp-147 contacts mRNA. Position 190 (Gly-190) interacts with RNA. Lys-259, His-289, Gln-290, and Lys-336 together coordinate RNA. TPR repeat units lie at residues 305-339, 340-373, 378-412, and 437-470; these read ATKGQPRGQNREKLDKMIRSAIFHFESAVEKKPTF, EVAHLDLARMYIEAGNHRKAEENFQKLLCMKPVV, QDIHFHYGRFQEFQKKSDVNAIIHYLKAIKIEQAS, and LESLSLLGFVYKLEGNMNEALEYYERALRLAADF.

Belongs to the IFIT family. Component of an interferon-dependent multiprotein complex, at least composed of IFIT1, IFIT2 and IFIT3. Interacts (via TPR repeats 1-4) with RPL15. Interacts with STING1/MITA; could disrupt STING1 interaction with MAVS or TBK1, acting as a negative-feedback regulator of virus-triggered signaling. Interacts with EIF3E; this could be an alternative way to inhibit translation. Post-translationally, phosphorylated. ISGylated.

The protein localises to the cytoplasm. Functionally, plays a key role in the innate immune response as part of an interferon-dependent multiprotein complex, recognizing and sequestering viral RNAs that lack host-specific 2'-O-methylation at their 5' cap. By distinguishing these RNAs from host mRNAs, inhibits their translation by competing with the translation initiation factor eIF4E. Could also prevent viral replication through its interaction with DNA replication origin-binding protein E1 of several viruses. Causes the translocation of E1 from the nucleus to the cytoplasm and can also inhibit its helicase activity in vitro. Exhibits antiviral activity against many viruses from the Flaviviridae (West Nile virus, Dengue virus, hepatitis C virus), Coronaviridae (human 229E coronavirus, SARS-CoV-2 and SARS-CoV), Poxviridae (vaccinia virus) and Togaviridae (Sindbis virus) families. The polypeptide is Antiviral innate immune response effector IFIT1 (Homo sapiens (Human)).